A 134-amino-acid chain; its full sequence is Profilin-3 (134 aa).

Cysteines 13 and 118 form a disulfide. The Involved in PIP2 interaction motif lies at 84-100 (AVIRGKKGSGGITIKKT). Phosphothreonine is present on threonine 114.

This sequence belongs to the profilin family. In terms of assembly, occurs in many kinds of cells as a complex with monomeric actin in a 1:1 ratio. In terms of processing, phosphorylated by MAP kinases.

The protein resides in the cytoplasm. Its subcellular location is the cytoskeleton. Binds to actin and affects the structure of the cytoskeleton. At high concentrations, profilin prevents the polymerization of actin, whereas it enhances it at low concentrations. The chain is Profilin-3 from Olea europaea (Common olive).